A 528-amino-acid chain; its full sequence is Ribonuclease Y (528 aa).

The helical transmembrane segment at 15–35 threads the bilayer; sequence SLLVFALICGSIIGYFLYSFF. The KH domain maps to 217–277; it reads NISVVNIPNE…IRREIAKKTL (61 aa). The 94-residue stretch at 343–436 folds into the HD domain; that stretch reads VLKHSLEVAF…VAIADTLSSA (94 aa).

Belongs to the RNase Y family.

It is found in the cell membrane. Endoribonuclease that initiates mRNA decay. This is Ribonuclease Y from Onion yellows phytoplasma (strain OY-M).